We begin with the raw amino-acid sequence, 309 residues long: 4-diphosphocytidyl-2-C-methyl-D-erythritol kinase (309 aa).

Residue K28 is part of the active site. ATP is bound at residue P120–S130. D162 is a catalytic residue.

This sequence belongs to the GHMP kinase family. IspE subfamily.

The enzyme catalyses 4-CDP-2-C-methyl-D-erythritol + ATP = 4-CDP-2-C-methyl-D-erythritol 2-phosphate + ADP + H(+). It participates in isoprenoid biosynthesis; isopentenyl diphosphate biosynthesis via DXP pathway; isopentenyl diphosphate from 1-deoxy-D-xylulose 5-phosphate: step 3/6. Functionally, catalyzes the phosphorylation of the position 2 hydroxy group of 4-diphosphocytidyl-2C-methyl-D-erythritol. This chain is 4-diphosphocytidyl-2-C-methyl-D-erythritol kinase, found in Polaromonas sp. (strain JS666 / ATCC BAA-500).